The primary structure comprises 273 residues: 3-methyl-2-oxobutanoate hydroxymethyltransferase (273 aa).

Positions 53 and 92 each coordinate Mg(2+). 3-methyl-2-oxobutanoate-binding positions include 53–54 (DS), aspartate 92, and lysine 122. Glutamate 124 is a Mg(2+) binding site. Catalysis depends on glutamate 191, which acts as the Proton acceptor.

Belongs to the PanB family. Homodecamer; pentamer of dimers. Requires Mg(2+) as cofactor.

It localises to the cytoplasm. It catalyses the reaction 3-methyl-2-oxobutanoate + (6R)-5,10-methylene-5,6,7,8-tetrahydrofolate + H2O = 2-dehydropantoate + (6S)-5,6,7,8-tetrahydrofolate. The protein operates within cofactor biosynthesis; (R)-pantothenate biosynthesis; (R)-pantoate from 3-methyl-2-oxobutanoate: step 1/2. In terms of biological role, catalyzes the reversible reaction in which hydroxymethyl group from 5,10-methylenetetrahydrofolate is transferred onto alpha-ketoisovalerate to form ketopantoate. This Bacteroides fragilis (strain ATCC 25285 / DSM 2151 / CCUG 4856 / JCM 11019 / LMG 10263 / NCTC 9343 / Onslow / VPI 2553 / EN-2) protein is 3-methyl-2-oxobutanoate hydroxymethyltransferase.